Here is a 173-residue protein sequence, read N- to C-terminus: Large ribosomal subunit protein uL10 (173 aa).

Belongs to the universal ribosomal protein uL10 family. In terms of assembly, part of the ribosomal stalk of the 50S ribosomal subunit. The N-terminus interacts with L11 and the large rRNA to form the base of the stalk. The C-terminus forms an elongated spine to which L12 dimers bind in a sequential fashion forming a multimeric L10(L12)X complex.

Functionally, forms part of the ribosomal stalk, playing a central role in the interaction of the ribosome with GTP-bound translation factors. In Oleidesulfovibrio alaskensis (strain ATCC BAA-1058 / DSM 17464 / G20) (Desulfovibrio alaskensis), this protein is Large ribosomal subunit protein uL10.